A 343-amino-acid polypeptide reads, in one-letter code: Protein RecA (343 aa).

66-73 (GPESSGKT) contributes to the ATP binding site. Residues 319–343 (IERQIREKHLPKRSAKADEAESAEA) are disordered.

The protein belongs to the RecA family.

It is found in the cytoplasm. Can catalyze the hydrolysis of ATP in the presence of single-stranded DNA, the ATP-dependent uptake of single-stranded DNA by duplex DNA, and the ATP-dependent hybridization of homologous single-stranded DNAs. It interacts with LexA causing its activation and leading to its autocatalytic cleavage. The protein is Protein RecA of Thioalkalivibrio sulfidiphilus (strain HL-EbGR7).